Reading from the N-terminus, the 94-residue chain is Protein SpdA (94 aa).

Residues 41-68 (GPILLALVAAGGSVGVVMTLCLLLQTAA) form a helical membrane-spanning segment.

It is found in the cell membrane. In terms of biological role, involved in plasmid transfer. The polypeptide is Protein SpdA (spdA) (Streptomyces lividans).